We begin with the raw amino-acid sequence, 354 residues long: Caffeic acid 3-O-methyltransferase (354 aa).

Position 121–127 (121–127 (MNQDKVL)) interacts with substrate. Residues 153–171 (AFEYHGKDQRFNKVFNSGM) form a substrate binding region. S-adenosyl-L-methionine is bound by residues G199, D222, D242, M243, and K256. H260 functions as the Proton acceptor in the catalytic mechanism.

This sequence belongs to the class I-like SAM-binding methyltransferase superfamily. Cation-independent O-methyltransferase family. COMT subfamily. Homodimer.

It catalyses the reaction (E)-caffeate + S-adenosyl-L-methionine = (E)-ferulate + S-adenosyl-L-homocysteine + H(+). It participates in aromatic compound metabolism; phenylpropanoid biosynthesis. Its function is as follows. Catalyzes the conversion of caffeic acid to ferulic acid and of 5-hydroxyferulic acid to sinapic acid. The resulting products may subsequently be converted to the corresponding alcohols that are incorporated into lignins. This Zinnia elegans (Garden zinnia) protein is Caffeic acid 3-O-methyltransferase.